The chain runs to 251 residues: UDP-Glc:alpha-D-GlcNAc-diphosphoundecaprenol beta-1,3-glucosyltransferase WfaP (251 aa).

Belongs to the glycosyltransferase 2 family. It depends on Mn(2+) as a cofactor. The cofactor is Mg(2+).

The protein resides in the cell inner membrane. The catalysed reaction is N-acetyl-alpha-D-glucosaminyl-di-trans,octa-cis-undecaprenyl diphosphate + UDP-alpha-D-glucose = beta-D-Glc-(1-&gt;3)-alpha-D-GlcNAc-di-trans,octa-cis-undecaprenyl diphosphate + UDP + H(+). Its pathway is bacterial outer membrane biogenesis; lipopolysaccharide biosynthesis. Catalyzes the addition of Glc, the second sugar moiety of the O56-antigen repeating unit, to GlcNAc-pyrophosphate-undecaprenol. This is UDP-Glc:alpha-D-GlcNAc-diphosphoundecaprenol beta-1,3-glucosyltransferase WfaP (wfaP) from Escherichia coli.